A 246-amino-acid chain; its full sequence is Carboxy-S-adenosyl-L-methionine synthase (246 aa).

Residues Tyr-39, 64 to 66, 89 to 90, 117 to 118, Asn-132, and Arg-199 each bind S-adenosyl-L-methionine; these read GCS, DN, and DI.

Belongs to the class I-like SAM-binding methyltransferase superfamily. Cx-SAM synthase family. As to quaternary structure, homodimer.

The enzyme catalyses prephenate + S-adenosyl-L-methionine = carboxy-S-adenosyl-L-methionine + 3-phenylpyruvate + H2O. Functionally, catalyzes the conversion of S-adenosyl-L-methionine (SAM) to carboxy-S-adenosyl-L-methionine (Cx-SAM). This Erwinia tasmaniensis (strain DSM 17950 / CFBP 7177 / CIP 109463 / NCPPB 4357 / Et1/99) protein is Carboxy-S-adenosyl-L-methionine synthase.